A 680-amino-acid chain; its full sequence is Zinc finger protein 334 (680 aa).

The KRAB domain maps to 10–81 (VSFQDLTVNF…EEFSNQNYPD (72 aa)). 14 consecutive C2H2-type zinc fingers follow at residues 237–259 (NECN…QRIH), 265–287 (YVCS…RRIH), 293–315 (YECS…QKIH), 321–343 (YECN…FRSH), 349–371 (YECK…QRTH), 377–399 (NECK…QRIH), 405–427 (YECS…RRSH), 433–455 (YECS…QITH), 461–483 (YECN…QRTH), 544–566 (YECN…QRTH), 572–594 (YECN…QRTH), 600–622 (YECN…RRIH), 628–650 (YECN…QKIH), and 656–678 (YECN…QKSH).

It belongs to the krueppel C2H2-type zinc-finger protein family.

It is found in the nucleus. May be involved in transcriptional regulation. The chain is Zinc finger protein 334 (ZNF334) from Homo sapiens (Human).